Consider the following 125-residue polypeptide: Ribonuclease P protein component (125 aa).

This sequence belongs to the RnpA family. In terms of assembly, consists of a catalytic RNA component (M1 or rnpB) and a protein subunit.

The catalysed reaction is Endonucleolytic cleavage of RNA, removing 5'-extranucleotides from tRNA precursor.. RNaseP catalyzes the removal of the 5'-leader sequence from pre-tRNA to produce the mature 5'-terminus. It can also cleave other RNA substrates such as 4.5S RNA. The protein component plays an auxiliary but essential role in vivo by binding to the 5'-leader sequence and broadening the substrate specificity of the ribozyme. In Clostridium botulinum (strain Eklund 17B / Type B), this protein is Ribonuclease P protein component.